The following is a 145-amino-acid chain: Antimicrobial peptide NK-lysin (145 aa).

Positions 1–22 (MTSRALLLLASALLGTPGLTFS) are cleaved as a signal peptide. Residues 23–62 (GLNPESYDLATAHLSDGEQFCQGLTQEDLQGDLLTERERQ) constitute a propeptide that is removed on maturation. A Saposin B-type domain is found at 62-142 (QGIACWSCRK…VDIKLCKHKA (81 aa)). Intrachain disulfides connect Cys-66–Cys-138, Cys-69–Cys-132, and Cys-97–Cys-107. Positions 141–145 (KAGLI) are excised as a propeptide.

It is found in the secreted. Its function is as follows. May be an effector molecule of cytotoxic activity. Has antimicrobial activity. This is Antimicrobial peptide NK-lysin (NKL) from Equus caballus (Horse).